The primary structure comprises 84 residues: U8-theraphotoxin-Hhn1c 3 (84 aa).

The N-terminal stretch at Met-1 to Cys-21 is a signal peptide. 5 disulfide bridges follow: Cys-23/Cys-35, Cys-29/Cys-44, Cys-34/Cys-67, Cys-54/Cys-75, and Cys-69/Cys-81.

It belongs to the AVIT (prokineticin) family. In terms of tissue distribution, expressed by the venom gland.

Its subcellular location is the secreted. This Cyriopagopus hainanus (Chinese bird spider) protein is U8-theraphotoxin-Hhn1c 3.